Reading from the N-terminus, the 724-residue chain is Probable protein phosphatase 2C 62 (724 aa).

The segment at 357-385 is disordered; sequence DELISTSEATRHSVDEIAQKPIIDTSEKN. Basic and acidic residues predominate over residues 365–374; it reads ATRHSVDEIA. Positions 482 to 719 constitute a PPM-type phosphatase domain; sequence DSGFASLQSP…DAVTVIISFV (238 aa). Mn(2+) contacts are provided by aspartate 514, glycine 515, aspartate 643, and aspartate 710.

Belongs to the PP2C family. Requires Mg(2+) as cofactor. It depends on Mn(2+) as a cofactor.

It catalyses the reaction O-phospho-L-seryl-[protein] + H2O = L-seryl-[protein] + phosphate. It carries out the reaction O-phospho-L-threonyl-[protein] + H2O = L-threonyl-[protein] + phosphate. The polypeptide is Probable protein phosphatase 2C 62 (Arabidopsis thaliana (Mouse-ear cress)).